A 705-amino-acid chain; its full sequence is Elongation factor G (705 aa).

The region spanning 8–291 (EKVRNIGIMA…AVVEYLPSPI (284 aa)) is the tr-type G domain. Residues 17 to 24 (AHIDAGKT), 90 to 94 (DTPGH), and 144 to 147 (NKMD) each bind GTP.

It belongs to the TRAFAC class translation factor GTPase superfamily. Classic translation factor GTPase family. EF-G/EF-2 subfamily.

The protein localises to the cytoplasm. Its function is as follows. Catalyzes the GTP-dependent ribosomal translocation step during translation elongation. During this step, the ribosome changes from the pre-translocational (PRE) to the post-translocational (POST) state as the newly formed A-site-bound peptidyl-tRNA and P-site-bound deacylated tRNA move to the P and E sites, respectively. Catalyzes the coordinated movement of the two tRNA molecules, the mRNA and conformational changes in the ribosome. This Chloroherpeton thalassium (strain ATCC 35110 / GB-78) protein is Elongation factor G.